We begin with the raw amino-acid sequence, 691 residues long: Solute carrier organic anion transporter family member 1B1 (691 aa).

The Cytoplasmic portion of the chain corresponds to 1–28 (MDQNQHLNKTAEAQPSENKKTRYCNGLK). Residues 29–48 (MFLAALSLSFIAKTLGAIIM) form a helical membrane-spanning segment. At 49–67 (KSSIIHIERRFEISSSLVG) the chain is on the extracellular side. A helical membrane pass occupies residues 68–88 (FIDGSFEIGNLLVIVFVSYFG). Residues 89-94 (SKLHRP) lie on the Cytoplasmic side of the membrane. A helical transmembrane segment spans residues 95 to 119 (KLIGIGCFIMGIGGVLTALPHFFMG). The Extracellular segment spans residues 120 to 168 (YYRYSKETNINSSENSTSTLSTCLINQILSLNRASPEIVGKGCLKESGS). N-linked (GlcNAc...) asparagine glycosylation is found at Asn-130 and Asn-134. A helical transmembrane segment spans residues 169 to 197 (YMWIYVFMGNMLRGIGETPIVPLGLSYID). Topologically, residues 198–216 (DFAKEGHSSLYLGILNAIA) are cytoplasmic. The chain crosses the membrane as a helical span at residues 217 to 237 (MIGPIIGFTLGSLFSKMYVDI). Topologically, residues 238–255 (GYVDLSTIRITPTDSRWV) are extracellular. Residues 256 to 280 (GAWWLNFLVSGLFSIISSIPFFFLP) form a helical membrane-spanning segment. At 281 to 331 (QTPNKPQKERKASLSLHVLETNDEKDQTANLTNQGKNITKNVTGFFQSFKS) the chain is on the cytoplasmic side. Ser-293 and Ser-295 each carry phosphoserine. The chain crosses the membrane as a helical span at residues 332–353 (ILTNPLYVMFVLLTLLQVSSYI). Residues 354–373 (GAFTYVFKYVEQQYGQPSSK) lie on the Extracellular side of the membrane. Residues 374–397 (ANILLGVITIPIFASGMFLGGYII) traverse the membrane as a helical segment. Residues 398-401 (KKFK) are Cytoplasmic-facing. The chain crosses the membrane as a helical span at residues 402–425 (LNTVGIAKFSCFTAVMSLSFYLLY). At 426-537 (FFILCENKSV…DACTRKFYFF (112 aa)) the chain is on the extracellular side. A glycan (N-linked (GlcNAc...) asparagine) is linked at Asn-432. The region spanning 453 to 508 (DVPLSYCNSDCNCDESQWEPVCGNNGITYISPCLAGCKSSSGNKKPIVFYNCSCLE) is the Kazal-like domain. Disulfide bonds link Cys-459-Cys-489, Cys-465-Cys-485, and Cys-474-Cys-506. 2 N-linked (GlcNAc...) asparagine glycosylation sites follow: Asn-503 and Asn-516. A helical membrane pass occupies residues 538–560 (VAIQVLNLFFSALGGTSHVMLIV). Topologically, residues 561 to 569 (KIVQPELKS) are cytoplasmic. The chain crosses the membrane as a helical span at residues 570–595 (LALGFHSMVIRALGGILAPIYFGALI). The Extracellular portion of the chain corresponds to 596 to 629 (DTTCIKWSTNNCGTRGSCRTYNSTSFSRVYLGLS). The N-linked (GlcNAc...) asparagine glycan is linked to Asn-617. The chain crosses the membrane as a helical span at residues 630 to 647 (SMLRVSSLVLYIILIYAM). At 648 to 691 (KKKYQEKDINASENGSVMDEANLESLNKNKHFVPSAGADSETHC) the chain is on the cytoplasmic side. 2 positions are modified to phosphoserine: Ser-672 and Ser-682.

Belongs to the organo anion transporter (TC 2.A.60) family. As to expression, highly expressed in liver, at the basolateral membranes of centrilobular hepatocytes. Expressed in liver (at protein level). Expressed in fetal liver. Not detected in heart, brain, placenta, lung, skeletal muscle, kidney, pancreas, spleen, thymus, prostate, testis, ovary, small intestine, colon and leukocyte. In testis, primarily localized to the basal membrane of Sertoli cells and weakly expressed in Leydig cells and within the tubules.

Its subcellular location is the basolateral cell membrane. The protein resides in the basal cell membrane. It carries out the reaction taurocholate(out) = taurocholate(in). The catalysed reaction is dehydroepiandrosterone 3-sulfate(out) = dehydroepiandrosterone 3-sulfate(in). It catalyses the reaction estrone 3-sulfate(out) = estrone 3-sulfate(in). The enzyme catalyses 3,3',5'-triiodo-L-thyronine(out) = 3,3',5'-triiodo-L-thyronine(in). It carries out the reaction L-thyroxine(out) = L-thyroxine(in). The catalysed reaction is prostaglandin E2(out) = prostaglandin E2(in). It catalyses the reaction thromboxane B2(out) = thromboxane B2(in). The enzyme catalyses 17beta-estradiol 17-O-(beta-D-glucuronate)(out) = 17beta-estradiol 17-O-(beta-D-glucuronate)(in). It carries out the reaction leukotriene C4(out) = leukotriene C4(in). The catalysed reaction is leukotriene E4(out) = leukotriene E4(in). It catalyses the reaction (4E,15E)-bilirubin IXalpha C8-beta-D-glucuronoside(out) = (4E,15E)-bilirubin IXalpha C8-beta-D-glucuronoside(in). The enzyme catalyses bilirubin IXalpha bis-beta-D-glucuronoside(out) = bilirubin IXalpha bis-beta-D-glucuronoside(in). Functionally, mediates the Na(+)-independent uptake of organic anions. Shows broad substrate specificity, can transport both organic anions such as bile acid taurocholate (cholyltaurine) and conjugated steroids (dehydroepiandrosterone 3-sulfate, 17-beta-glucuronosyl estradiol, and estrone 3-sulfate), as well as eicosanoids (prostaglandin E2, thromboxane B2, leukotriene C4, and leukotriene E4), and thyroid hormones (T4/L-thyroxine, and T3/3,3',5'-triiodo-L-thyronine). Can take up bilirubin glucuronides from plasma into the liver, contributing to the detoxification-enhancing liver-blood shuttling loop. Involved in the clearance of endogenous and exogenous substrates from the liver. Transports coproporphyrin I and III, by-products of heme synthesis, and may be involved in their hepatic disposition. May contribute to regulate the transport of organic compounds in testes across the blood-testis-barrier. Can transport HMG-CoA reductase inhibitors (also known as statins), such as pravastatin and pitavastatin, a clinically important class of hypolipidemic drugs. May play an important role in plasma and tissue distribution of the structurally diverse chemotherapeutic drug methotrexate. May also transport antihypertension agents, such as the angiotensin-converting enzyme (ACE) inhibitor prodrug enalapril, and the highly selective angiotensin II AT1-receptor antagonist valsartan, in the liver. Shows a pH-sensitive substrate specificity towards prostaglandin E2 and T4 which may be ascribed to the protonation state of the binding site and leads to a stimulation of substrate transport in an acidic microenvironment. Hydrogencarbonate/HCO3(-) acts as the probable counteranion that exchanges for organic anions. The chain is Solute carrier organic anion transporter family member 1B1 (SLCO1B1) from Homo sapiens (Human).